The primary structure comprises 88 residues: Bombyxin B-8 (88 aa).

Positions 1–18 are cleaved as a signal peptide; it reads MKTSVIFVLIVLNLMWSG. 3 disulfides stabilise this stretch: Cys28–Cys74, Cys40–Cys87, and Cys73–Cys78. A propeptide spans 47 to 65 (c peptide like); the sequence is GGAQYAPYFWQKAYLGSRG.

The protein belongs to the insulin family. In terms of assembly, heterodimer of a B chain and an A chain linked by two disulfide bonds.

The protein localises to the secreted. Brain peptide responsible for activation of prothoracic glands to produce ecdysone in insects. This chain is Bombyxin B-8 (BBXB8), found in Bombyx mori (Silk moth).